Reading from the N-terminus, the 34-residue chain is Photosystem II reaction center protein M (34 aa).

A helical transmembrane segment spans residues 5–25 (ILAFIATALFILIPTSFLLII).

This sequence belongs to the PsbM family. In terms of assembly, PSII is composed of 1 copy each of membrane proteins PsbA, PsbB, PsbC, PsbD, PsbE, PsbF, PsbH, PsbI, PsbJ, PsbK, PsbL, PsbM, PsbT, PsbX, PsbY, PsbZ, Psb30/Ycf12, at least 3 peripheral proteins of the oxygen-evolving complex and a large number of cofactors. It forms dimeric complexes. Detected in both etioplasts and green leaves; PSII is only assembled in green leaves.

It localises to the plastid. It is found in the chloroplast thylakoid membrane. Functionally, one of the components of the core complex of photosystem II (PSII). PSII is a light-driven water:plastoquinone oxidoreductase that uses light energy to abstract electrons from H(2)O, generating O(2) and a proton gradient subsequently used for ATP formation. It consists of a core antenna complex that captures photons, and an electron transfer chain that converts photonic excitation into a charge separation. This subunit is found at the monomer-monomer interface. This is Photosystem II reaction center protein M from Hordeum vulgare (Barley).